The primary structure comprises 87 residues: Omega-lycotoxin-Am1d (87 aa).

The signal sequence occupies residues 1-17 (MKLSIFFVLFFIAIAYC). Positions 18–40 (QPEFLDDEEDEVEETLPVAEEGR) are excised as a propeptide. 4 disulfide bridges follow: C44-C59, C51-C64, C58-C84, and C66-C82.

It belongs to the neurotoxin omega-lctx family. In terms of tissue distribution, expressed by the venom gland.

It localises to the secreted. Modulates Cav2.1/CACNA1A voltage-gated calcium channels (P/Q-type currents) in rat cerebellar Purkinje cells and hippocampal CA1-CA3 neurons. At saturating concentrations (&gt;10 nM) decelerates activation kinetics and slightly increases peak amplitude without affecting deactivation kinetics. In vivo, does not cause death when intravenously injected into mice. In rat models, through its activity on Cav2.1/CACNA1A, has an ameliorative effect on memory defects provoked by hyperstimulation of N-methyl-D-aspartate receptors (NMDARs) in the hippocampus. The chain is Omega-lycotoxin-Am1d from Alopecosa marikovskyi (Wolf spider).